The primary structure comprises 340 residues: Ketol-acid reductoisomerase (NADP(+)) (340 aa).

A KARI N-terminal Rossmann domain is found at 3 to 182 (VTMYYEEDVE…GCARVGIIET (180 aa)). NADP(+) is bound by residues 26 to 29 (YGSQ), arginine 49, serine 53, and 83 to 86 (DELQ). Histidine 108 is an active-site residue. Glycine 134 contacts NADP(+). One can recognise a KARI C-terminal knotted domain in the interval 183–328 (TFKEETEEDL…AELRKAMPFT (146 aa)). Aspartate 191, glutamate 195, glutamate 227, and glutamate 231 together coordinate Mg(2+). Serine 252 contributes to the substrate binding site.

This sequence belongs to the ketol-acid reductoisomerase family. Requires Mg(2+) as cofactor.

The catalysed reaction is (2R)-2,3-dihydroxy-3-methylbutanoate + NADP(+) = (2S)-2-acetolactate + NADPH + H(+). The enzyme catalyses (2R,3R)-2,3-dihydroxy-3-methylpentanoate + NADP(+) = (S)-2-ethyl-2-hydroxy-3-oxobutanoate + NADPH + H(+). The protein operates within amino-acid biosynthesis; L-isoleucine biosynthesis; L-isoleucine from 2-oxobutanoate: step 2/4. It functions in the pathway amino-acid biosynthesis; L-valine biosynthesis; L-valine from pyruvate: step 2/4. In terms of biological role, involved in the biosynthesis of branched-chain amino acids (BCAA). Catalyzes an alkyl-migration followed by a ketol-acid reduction of (S)-2-acetolactate (S2AL) to yield (R)-2,3-dihydroxy-isovalerate. In the isomerase reaction, S2AL is rearranged via a Mg-dependent methyl migration to produce 3-hydroxy-3-methyl-2-ketobutyrate (HMKB). In the reductase reaction, this 2-ketoacid undergoes a metal-dependent reduction by NADPH to yield (R)-2,3-dihydroxy-isovalerate. The chain is Ketol-acid reductoisomerase (NADP(+)) from Lactococcus lactis subsp. cremoris (strain SK11).